A 270-amino-acid chain; its full sequence is ATP synthase subunit a (270 aa).

The next 5 membrane-spanning stretches (helical) occupy residues 38–58 (VHID…GIFY), 98–118 (IAPL…MDLV), 143–163 (DVNI…YYSI), 208–228 (LFGN…MLPW), and 239–259 (AIFH…LTIV).

The protein belongs to the ATPase A chain family. F-type ATPases have 2 components, CF(1) - the catalytic core - and CF(0) - the membrane proton channel. CF(1) has five subunits: alpha(3), beta(3), gamma(1), delta(1), epsilon(1). CF(0) has three main subunits: a(1), b(2) and c(9-12). The alpha and beta chains form an alternating ring which encloses part of the gamma chain. CF(1) is attached to CF(0) by a central stalk formed by the gamma and epsilon chains, while a peripheral stalk is formed by the delta and b chains.

The protein resides in the cell inner membrane. Key component of the proton channel; it plays a direct role in the translocation of protons across the membrane. This chain is ATP synthase subunit a, found in Vibrio alginolyticus.